The chain runs to 568 residues: Clathrin coat assembly protein AP180B (568 aa).

One can recognise an ENTH domain in the interval 1-127 (MSSLYTKLVK…EEYGRLGMDH (127 aa)). Positions 262–283 (HLREETKRQRGEPSEPQQDRKP) are enriched in basic and acidic residues. The segment at 262 to 302 (HLREETKRQRGEPSEPQQDRKPSTAISSTSSHNNNSNDKNK) is disordered. Residue K282 forms a Glycyl lysine isopeptide (Lys-Gly) (interchain with G-Cter in ubiquitin) linkage. Positions 284–298 (STAISSTSSHNNNSN) are enriched in low complexity. T449 carries the phosphothreonine modification.

This sequence belongs to the AP180 family. As to quaternary structure, interacts with PAN1 and the clathrin heavy and light chains CHC1 and CLC1.

Its subcellular location is the bud. It is found in the bud neck. The protein localises to the cell membrane. It localises to the cytoplasm. Its function is as follows. Involved in endocytosis and clathrin cage assembly. This chain is Clathrin coat assembly protein AP180B (YAP1802), found in Saccharomyces cerevisiae (strain ATCC 204508 / S288c) (Baker's yeast).